The following is a 265-amino-acid chain: Thiazole synthase (265 aa).

K107 (schiff-base intermediate with DXP) is an active-site residue. 1-deoxy-D-xylulose 5-phosphate is bound by residues G168, 194–195 (AG), and 216–217 (NT).

It belongs to the ThiG family. Homotetramer. Forms heterodimers with either ThiH or ThiS.

Its subcellular location is the cytoplasm. The enzyme catalyses [ThiS sulfur-carrier protein]-C-terminal-Gly-aminoethanethioate + 2-iminoacetate + 1-deoxy-D-xylulose 5-phosphate = [ThiS sulfur-carrier protein]-C-terminal Gly-Gly + 2-[(2R,5Z)-2-carboxy-4-methylthiazol-5(2H)-ylidene]ethyl phosphate + 2 H2O + H(+). Its pathway is cofactor biosynthesis; thiamine diphosphate biosynthesis. Functionally, catalyzes the rearrangement of 1-deoxy-D-xylulose 5-phosphate (DXP) to produce the thiazole phosphate moiety of thiamine. Sulfur is provided by the thiocarboxylate moiety of the carrier protein ThiS. In vitro, sulfur can be provided by H(2)S. This chain is Thiazole synthase, found in Pseudomonas paraeruginosa (strain DSM 24068 / PA7) (Pseudomonas aeruginosa (strain PA7)).